The following is a 695-amino-acid chain: Interleukin-1 receptor accessory protein-like 1 (695 aa).

Residues 1–24 form the signal peptide; the sequence is MKAPIPHLILLYATFTQSLKVVTK. Residues 25-134 enclose the Ig-like C2-type 1 domain; that stretch reads RGSADGCTDW…YCMKVSISLT (110 aa). Residues 25-357 lie on the Extracellular side of the membrane; the sequence is RGSADGCTDW…LLHKRELMYT (333 aa). 2 disulfides stabilise this stretch: Cys31/Cys126 and Cys53/Cys118. Asn63, Asn122, and Asn138 each carry an N-linked (GlcNAc...) asparagine glycan. 2 cysteine pairs are disulfide-bonded: Cys143–Cys185 and Cys164–Cys216. 2 consecutive Ig-like C2-type domains span residues 143-232 and 242-350; these read CYNS…TELT and PKLL…VLLH. Asn213, Asn264, and Asn331 each carry an N-linked (GlcNAc...) asparagine glycan. Residues Cys267 and Cys334 are joined by a disulfide bond. Residues 358 to 378 traverse the membrane as a helical segment; it reads VELAGGLGAILLLLICSVTIY. Topologically, residues 379–695 are cytoplasmic; the sequence is KCYKIEIMLF…RETSISSVIW (317 aa). The region spanning 403–558 is the TIR domain; sequence KDYDAYLSYT…KFWKRLQYEM (156 aa). The active site involves Glu490. Residues 548-643 form an interaction with NCS1 region; the sequence is SKFWKRLQYE…TGTLPLTSIG (96 aa). The tract at residues 657 to 679 is disordered; that stretch reads NGQRPQTKSNREPNPDEAHTNSA. Positions 665-675 are enriched in basic and acidic residues; sequence SNREPNPDEAH.

Belongs to the interleukin-1 receptor family. In terms of assembly, homodimer. Interacts (calcium-independent) with NCS1/FREQ. Interacts (via the first immunoglobilin domain) with PTPRD (via the second immunoglobilin domain); this interaction is PTPRD-splicing-dependent and induces pre- and post-synaptic differentiation of neurons and is required for IL1RAPL1-mediated synapse formation. Detected in total brain extracts, olfactory bulb, hippocampus and striatum (at protein level).

The protein localises to the cell membrane. Its subcellular location is the cytoplasm. It is found in the cell projection. It localises to the axon. The protein resides in the dendrite. It catalyses the reaction NAD(+) + H2O = ADP-D-ribose + nicotinamide + H(+). Its function is as follows. May regulate secretion and presynaptic differentiation through inhibition of the activity of N-type voltage-gated calcium channel. May activate the MAP kinase JNK. Plays a role in neurite outgrowth. During dendritic spine formation can bidirectionally induce pre- and post-synaptic differentiation of neurons by trans-synaptically binding to PTPRD. In Mus musculus (Mouse), this protein is Interleukin-1 receptor accessory protein-like 1 (Il1rapl1).